The following is a 264-amino-acid chain: Glutamate racemase (264 aa).

Substrate is bound by residues 10 to 11 (DS) and 42 to 43 (YG). Residue C73 is the Proton donor/acceptor of the active site. Residue 74–75 (NT) participates in substrate binding. Residue C183 is the Proton donor/acceptor of the active site. A substrate-binding site is contributed by 184–185 (TH).

Belongs to the aspartate/glutamate racemases family.

It catalyses the reaction L-glutamate = D-glutamate. The protein operates within cell wall biogenesis; peptidoglycan biosynthesis. In terms of biological role, provides the (R)-glutamate required for cell wall biosynthesis. This is Glutamate racemase from Streptococcus pyogenes serotype M18 (strain MGAS8232).